Here is a 160-residue protein sequence, read N- to C-terminus: Endoribonuclease YbeY (160 aa).

Positions 118, 122, and 128 each coordinate Zn(2+).

It belongs to the endoribonuclease YbeY family. Requires Zn(2+) as cofactor.

Its subcellular location is the cytoplasm. Its function is as follows. Single strand-specific metallo-endoribonuclease involved in late-stage 70S ribosome quality control and in maturation of the 3' terminus of the 16S rRNA. The polypeptide is Endoribonuclease YbeY (Treponema pallidum (strain Nichols)).